Reading from the N-terminus, the 405-residue chain is Glyceraldehyde-3-phosphate dehydrogenase A, chloroplastic (405 aa).

The N-terminal 68 residues, 1–68 (MASATFSVAK…GHKKSLVVEA (68 aa)), are a transit peptide targeting the chloroplast. Residues 80-81 (RI), D104, and R149 contribute to the NADP(+) site. D-glyceraldehyde 3-phosphate contacts are provided by residues 221–223 (SCT), T252, R267, 280–281 (TG), and R303. C222 functions as the Nucleophile in the catalytic mechanism. An NADP(+)-binding site is contributed by N385.

Belongs to the glyceraldehyde-3-phosphate dehydrogenase family. As to quaternary structure, tetramer of either four A chains (GAPDH 2) or two A and two B chains (GAPDH 1).

The protein resides in the plastid. It is found in the chloroplast. It catalyses the reaction D-glyceraldehyde 3-phosphate + phosphate + NADP(+) = (2R)-3-phospho-glyceroyl phosphate + NADPH + H(+). It participates in carbohydrate biosynthesis; Calvin cycle. This is Glyceraldehyde-3-phosphate dehydrogenase A, chloroplastic (GAPA) from Pisum sativum (Garden pea).